The chain runs to 561 residues: Melanopsin-A (561 aa).

Residues 1–34 lie on the Extracellular side of the membrane; sequence MRPSTDTMEADTAATHRNFITKVDVPDHAHYTVA. A helical transmembrane segment spans residues 35-55; the sequence is FFVSVIGTLGVTGNALVQFAF. At 56-68 the chain is on the cytoplasmic side; that stretch reads YSNKKLRNLPNYF. The helical transmembrane segment at 69–89 threads the bilayer; the sequence is IMNQAASDFLMAFTQSPFFFI. Over 90–104 the chain is Extracellular; it reads NCLNREWIFGELGCK. The cysteines at positions 103 and 181 are disulfide-linked. The chain crosses the membrane as a helical span at residues 105–125; that stretch reads LYAFLGALFGITSMINLLAIS. Residues 126–148 are Cytoplasmic-facing; the sequence is LDRYMVITRPLEAMKWNSKRRTT. The chain crosses the membrane as a helical span at residues 149–169; it reads IAILLVWLYSLAWSLAPLVGW. Topologically, residues 170 to 201 are extracellular; sequence SSYIPEGLRTSCTWDYVTYTASNRSYTMMLCC. Residue Asn-192 is glycosylated (N-linked (GlcNAc...) asparagine). The chain crosses the membrane as a helical span at residues 202–222; sequence FVFFIPLAIISYCYLFMFLAI. Topologically, residues 223–255 are cytoplasmic; that stretch reads RKTSRDVERLGIQVRKSTIIRQKSIRTEWKLAK. Residues 256–276 form a helical membrane-spanning segment; that stretch reads IAFVVIVVYVLSWSPYACVTM. Residues 277–291 lie on the Extracellular side of the membrane; that stretch reads ISWSGHANILSPYSK. A helical transmembrane segment spans residues 292–312; that stretch reads TVPAVIAKASTIYNPFIYAII. Lys-299 is modified (N6-(retinylidene)lysine). The Cytoplasmic portion of the chain corresponds to 313–561; the sequence is HQKYRKTLAD…EDSLEDNDVV (249 aa). 4 disordered regions span residues 359–385, 404–448, 479–503, and 539–561; these read AIRRQSTAASRHASASKTAAGASSYSS, ASFR…SATH, NGLSDAGKKTTVANGTPGNHKSKSA, and SFTDDGSVGTVVDEDSLEDNDVV. Positions 371 to 385 are enriched in low complexity; that stretch reads ASASKTAAGASSYSS. Residues 550 to 561 are compositionally biased toward acidic residues; sequence VDEDSLEDNDVV.

The protein belongs to the G-protein coupled receptor 1 family. Opsin subfamily. As to expression, expressed in retina and brain. Expressed in a subset of retinal horizontal cells as well as a small number of amacrine and retinal ganglion cells. Also expressed in a small population of neurons in the suprachiasmatic nucleus (SNC).

The protein resides in the cell membrane. Photoreceptor implicated in non-image-forming responses to light. This chain is Melanopsin-A (opn4a), found in Gadus morhua (Atlantic cod).